The following is a 217-amino-acid chain: 3,4-dihydroxy-2-butanone 4-phosphate synthase (217 aa).

Residues arginine 37–glutamate 38, aspartate 42, arginine 150–threonine 154, and glutamate 174 each bind D-ribulose 5-phosphate. Glutamate 38 contacts Mg(2+). Histidine 153 provides a ligand contact to Mg(2+).

This sequence belongs to the DHBP synthase family. In terms of assembly, homodimer. Requires Mg(2+) as cofactor. It depends on Mn(2+) as a cofactor.

The enzyme catalyses D-ribulose 5-phosphate = (2S)-2-hydroxy-3-oxobutyl phosphate + formate + H(+). It functions in the pathway cofactor biosynthesis; riboflavin biosynthesis; 2-hydroxy-3-oxobutyl phosphate from D-ribulose 5-phosphate: step 1/1. Its function is as follows. Catalyzes the conversion of D-ribulose 5-phosphate to formate and 3,4-dihydroxy-2-butanone 4-phosphate. The polypeptide is 3,4-dihydroxy-2-butanone 4-phosphate synthase (Escherichia coli O17:K52:H18 (strain UMN026 / ExPEC)).